A 229-amino-acid chain; its full sequence is Flagellar L-ring protein (229 aa).

The N-terminal stretch at 1–23 is a signal peptide; sequence MNPLTRVALAVAAFAALVLALSA. Cys-24 is lipidated: N-palmitoyl cysteine. Cys-24 carries the S-diacylglycerol cysteine lipid modification.

Belongs to the FlgH family. The basal body constitutes a major portion of the flagellar organelle and consists of four rings (L,P,S, and M) mounted on a central rod.

It is found in the cell outer membrane. Its subcellular location is the bacterial flagellum basal body. Its function is as follows. Assembles around the rod to form the L-ring and probably protects the motor/basal body from shearing forces during rotation. This Anaeromyxobacter sp. (strain K) protein is Flagellar L-ring protein.